The primary structure comprises 274 residues: MRVLRSPAKVNLGLWVTGKRADGYHDIVTVFHTVDFHDRIFIKRSHSLKIKTSSPLIPEGEENIVYKALKRFEEWTGVSPEVEVFIEKNIPAGAGLGGGSSNAAVVLKEVNSMYGEILSEKELSELASTIGADVPFFLKGGLAVAEGIGDKLRFLDKKIEREIFIIYPAVHVSTKEIYSKVTPDILTKKEDLHIIDSLLDDFEYFLENIENTLGEIALESYPQMREVYNTLEYLGYKPFVSGSGSSIFAFGKPEAEIEKICQVKGWKLIKTVLR.

The active site involves lysine 9. 91 to 101 (PAGAGLGGGSS) serves as a coordination point for ATP. Aspartate 133 is an active-site residue.

It belongs to the GHMP kinase family. IspE subfamily.

The enzyme catalyses 4-CDP-2-C-methyl-D-erythritol + ATP = 4-CDP-2-C-methyl-D-erythritol 2-phosphate + ADP + H(+). It functions in the pathway isoprenoid biosynthesis; isopentenyl diphosphate biosynthesis via DXP pathway; isopentenyl diphosphate from 1-deoxy-D-xylulose 5-phosphate: step 3/6. Its function is as follows. Catalyzes the phosphorylation of the position 2 hydroxy group of 4-diphosphocytidyl-2C-methyl-D-erythritol. In Persephonella marina (strain DSM 14350 / EX-H1), this protein is 4-diphosphocytidyl-2-C-methyl-D-erythritol kinase.